Consider the following 358-residue polypeptide: Popeye domain-containing protein 1 (358 aa).

Residues 1-48 (MNSTESIPLAQSTVAGFTSELESLTPVPSNETTCENWREIHHLVFHVA) lie on the Extracellular side of the membrane. 2 N-linked (GlcNAc...) asparagine glycosylation sites follow: asparagine 2 and asparagine 30. The chain crosses the membrane as a helical span at residues 49-69 (NVCFAVGLLIPTTLHLHMILL). Arginine 70 is a topological domain (cytoplasmic). The chain crosses the membrane as a helical span at residues 71-91 (VMLSLGCTLYVVWATLYRCAL). A topological domain (extracellular) is located at residue aspartate 92. The helical transmembrane segment at 93 to 113 (VMIWNSVFLGINILHLSYLLY) threads the bilayer. Residues 93–115 (VMIWNSVFLGINILHLSYLLYKK) form a required for interaction with CAV3 region. The Cytoplasmic segment spans residues 114 to 358 (KKRPVKIEKE…PDALKVHQLP (245 aa)). Positions 136–186 (RVPPDLFRRLTGQFCMIQTLKRGQVYATEDKTSVDDRLSILLKGRMKVSYR) are required for interaction with KCNK2. 2 positions are modified to phosphoserine: serine 295 and serine 318. Residues 313–323 (SSSTASLPMSS) are compositionally biased toward low complexity. Residues 313 to 350 (SSSTASLPMSSPQQRASAKMKPIEEGVEDDDEVFVSPD) form a disordered region.

This sequence belongs to the popeye family. As to quaternary structure, homodimer. Homodimerization requires the C-terminus cytoplasmic region. Interacts (via the C-terminus cytoplasmic tail) with TJP1. Interacts (via the C-terminus cytoplasmic tail) with ARHGEF25/GEFT (via the DH domain). Interacts (via the C-terminus cytoplasmic tail) with VAMP3. Interacts with KCNK2; the interaction enhances KCNK2 surface expression and is inhibited by cAMP. Interacts with CAV3. Expressed in epithelial cells, skeletal muscle, heart and intestinal smooth muscle (at protein level). Expressed in fetal and adult heart and skeletal muscle.

The protein localises to the lateral cell membrane. The protein resides in the cell junction. Its subcellular location is the tight junction. It localises to the membrane. It is found in the cell membrane. The protein localises to the sarcolemma. The protein resides in the caveola. In terms of biological role, cell adhesion molecule involved in the establishment and/or maintenance of cell integrity. Involved in the formation and regulation of the tight junction (TJ) paracellular permeability barrier in epithelial cells. Plays a role in VAMP3-mediated vesicular transport and recycling of different receptor molecules through its interaction with VAMP3. Plays a role in the regulation of cell shape and movement by modulating the Rho-family GTPase activity through its interaction with ARHGEF25/GEFT. Induces primordial adhesive contact and aggregation of epithelial cells in a Ca(2+)-independent manner. Also involved in striated muscle regeneration and repair and in the regulation of cell spreading. Important for the maintenance of cardiac function. Plays a regulatory function in heart rate dynamics mediated, at least in part, through cAMP-binding and, probably, by increasing cell surface expression of the potassium channel KCNK2 and enhancing current density. Is a caveolae-associated protein important for the preservation of caveolae structural and functional integrity as well as for heart protection against ischemia injury. The polypeptide is Popeye domain-containing protein 1 (Mus musculus (Mouse)).